The chain runs to 624 residues: MTLFRSHLRFLFKPRFLYFQSPTGQSSRPFSTSQILRTALDMPPPPVDTTQRLAKLRELMKQNKVDVYIVPSEDSHQSEYIAPCDGRRAFISGFTGSAGCAIVSMSKAALSTDGRYFSQAAKQLDANWKLLKRGVEGVPTWEEWTAEQAENGKVVGVDPSLITAADARKLSQTLKATGGSLVGIDQNLIDIVWGDERPARPVTTITVQPVELAGKPFEEKVEALRKELATKKRSAMVISAEIYVDDSRLSPEARKQLEGKVVLKPYDAIFQASKVLAESKASASDGAASGKFLLSNKASWSLSLALGGEQNVDEVRSPITDAKAIKNDVELEGFRKCHIRDGAALIEYFAWLENALIKEGAKLDEVDGADKLYEIRKKYDLFVGNSFDTISSTGANGAIIHYKPEKSTCSVIDPKAMYLCDSGGQYKDGTTDTTRTLHFGEPTEFQKKAYALVLKGHISIDNAIFPKGTTGYAIDSFARQHLWREGLDYLHGTGHGVGSFLNVHEGPMGIGSRAQYAEVPLSAKNVLSNEPGYYEDGNFGIRLENLVICKEVETTHKFGDKPFLGFEYITMVPFCQKLLDASLLTEAERKWVNDYHAKVWEKTSPFFEKDELTLNWLKRETQPI.

Mn(2+) is bound by residues Asp421, Asp432, Glu530, and Glu544.

This sequence belongs to the peptidase M24B family. Mn(2+) is required as a cofactor.

It catalyses the reaction Release of any N-terminal amino acid, including proline, that is linked to proline, even from a dipeptide or tripeptide.. Catalyzes the removal of a penultimate prolyl residue from the N-termini of peptides. The protein is Probable Xaa-Pro aminopeptidase P (AMPP) of Arthroderma otae (strain ATCC MYA-4605 / CBS 113480) (Microsporum canis).